We begin with the raw amino-acid sequence, 992 residues long: Meckelin (992 aa).

The signal sequence occupies residues 1–36 (MVTRTRPVAAMAVRSRSSSRTGTAYLLLVLCEVSWA). Positions 37-280 (QIFSFPFRRP…FHYIFESTAG (244 aa)) are cysteine-rich. Over 37-516 (QIFSFPFRRP…SVKYEMNQGD (480 aa)) the chain is Extracellular. 12 disulfides stabilise this stretch: cysteine 49-cysteine 62, cysteine 65-cysteine 78, cysteine 80-cysteine 97, cysteine 100-cysteine 114, cysteine 117-cysteine 127, cysteine 129-cysteine 150, cysteine 153-cysteine 170, cysteine 173-cysteine 184, cysteine 186-cysteine 197, cysteine 237-cysteine 246, cysteine 253-cysteine 268, and cysteine 354-cysteine 375. Asparagine 242 carries N-linked (GlcNAc...) asparagine glycosylation. The helical transmembrane segment at 517 to 545 (ASVHTDIALGVLGGLAVLSSLLKTAGWKR) threads the bilayer. The Cytoplasmic portion of the chain corresponds to 546–555 (RVGSPMIDLQ). The helical transmembrane segment at 556 to 587 (TVMKFLLYYAGDLANVFFIITVGTGLYWLIFF) threads the bilayer. Over 588-600 (KAQKSVSVLLPMP) the chain is Extracellular. Residues 601-628 (VQEERFVTYVGCAFAMKALQFLHKFISQ) traverse the membrane as a helical segment. Residues 629–667 (ISIDIFFIDWERPKGKVLKAVEGEGGVRSATVPVSIWRT) are Cytoplasmic-facing. The segment at residues 668–676 (YFVANEWNE) is an intramembrane region (helical). Residues 668 to 698 (YFVANEWNEIQTVRKINPLFQVLTTLFFLEV) traverse the membrane as a discontinuously helical segment. An intramembrane segment occupies 677-685 (IQTVRKINP). Residues 686–698 (LFQVLTTLFFLEV) constitute an intramembrane region (helical). The Extracellular segment spans residues 699–728 (VGFKNLALMDSSSSLSRNPSDYTAPYSRIL). Positions 729-754 (RYAVATAIWLVIGIIQVVFFAAFYER) form an intramembrane region, helical. A discontinuously helical membrane pass occupies residues 729–768 (RYAVATAIWLVIGIIQVVFFAAFYERFIEDKIRQFVDLCS). The stretch at 755 to 759 (FIEDK) is an intramembrane region. Positions 760–768 (IRQFVDLCS) form an intramembrane region, helical. The Cytoplasmic segment spans residues 769 to 923 (MSNVSVFLLS…SIFYNDEGHS (155 aa)). The segment at residues 924-926 (FSS) is an intramembrane region (helical). A discontinuously helical membrane pass occupies residues 924-949 (FSSVLYYGNEATLLIFDLLFFCVVDL). An intramembrane segment occupies 927 to 933 (VLYYGNE). An intramembrane region (helical) is located at residues 934-949 (ATLLIFDLLFFCVVDL). Over 950–954 (ACQDF) the chain is Extracellular. Residues 955-982 (VLASFLTYLQQEIFRFIRNTVGQKNLAT) form a helical membrane-spanning segment. Residues 983–992 (KTLVDERFLI) lie on the Cytoplasmic side of the membrane.

Homodimer. Part of the tectonic-like complex (also named B9 complex). Interacts with DNAJB9, DNAJC10 and mutated SFTPC. Interacts with SYNE2 during the early establishment of cell polarity. Interacts (via C-terminus) with FLNA. Interacts with TMEM218. Interacts with WNT5A. Interacts with ROR2.

The protein resides in the cell membrane. It localises to the endoplasmic reticulum membrane. Its subcellular location is the cytoplasm. It is found in the cytoskeleton. The protein localises to the cilium basal body. In terms of biological role, part of the tectonic-like complex which is required for tissue-specific ciliogenesis and may regulate ciliary membrane composition. Involved in centrosome migration to the apical cell surface during early ciliogenesis. Required for ciliary structure and function, including a role in regulating length and appropriate number through modulating centrosome duplication. Is a key regulator of stereociliary bundle orientation. Required for epithelial cell branching morphology. Essential for endoplasmic reticulum-associated degradation (ERAD) of surfactant protein C (sftpc). Involved in the negative regulation of canonical Wnt signaling, and activation of the non-canonical cascade stimulated by WNT5A. In non-canonical Wnt signaling, it may act as ROR2 coreceptor. This chain is Meckelin (Tmem67), found in Mus musculus (Mouse).